A 239-amino-acid polypeptide reads, in one-letter code: Probable transcriptional regulatory protein VC_A0006 (239 aa).

Belongs to the TACO1 family.

It is found in the cytoplasm. In Vibrio cholerae serotype O1 (strain ATCC 39315 / El Tor Inaba N16961), this protein is Probable transcriptional regulatory protein VC_A0006.